We begin with the raw amino-acid sequence, 330 residues long: Mitochondrial glycine transporter (330 aa).

Solcar repeat units lie at residues Ser11–Asn94, Leu122–Arg206, and Thr234–Arg318. The next 6 membrane-spanning stretches (helical) occupy residues Phe17–Gln42, Gly69–Val95, Leu128–Glu153, Gly181–Lys204, Ile238–Ile264, and Gly293–Ile311.

It belongs to the mitochondrial carrier (TC 2.A.29) family. SLC25A38 subfamily.

It localises to the mitochondrion inner membrane. It catalyses the reaction glycine(in) = glycine(out). Functionally, mitochondrial glycine transporter that imports glycine into the mitochondrial matrix. Plays an important role in providing glycine for the first enzymatic step in heme biosynthesis, the condensation of glycine with succinyl-CoA to produce 5-aminolevulinate (ALA) in the mitochondrial matrix. This chain is Mitochondrial glycine transporter, found in Sclerotinia sclerotiorum (strain ATCC 18683 / 1980 / Ss-1) (White mold).